The chain runs to 202 residues: Small ribosomal subunit protein uS4 (202 aa).

The disordered stretch occupies residues 23–42 (RKNARRAYAPGQHGQARKKR). The S4 RNA-binding domain maps to 90–153 (MRLDNTVFRL…RSQDLVKRNM (64 aa)).

This sequence belongs to the universal ribosomal protein uS4 family. As to quaternary structure, part of the 30S ribosomal subunit. Contacts protein S5. The interaction surface between S4 and S5 is involved in control of translational fidelity.

One of the primary rRNA binding proteins, it binds directly to 16S rRNA where it nucleates assembly of the body of the 30S subunit. Functionally, with S5 and S12 plays an important role in translational accuracy. The polypeptide is Small ribosomal subunit protein uS4 (Microcystis aeruginosa (strain NIES-843 / IAM M-2473)).